The primary structure comprises 35 residues: Photosystem II reaction center protein T (35 aa).

The helical transmembrane segment at 3–23 (ALVYTFLLVSTLGILFFAIFF) threads the bilayer.

Belongs to the PsbT family. PSII is composed of 1 copy each of membrane proteins PsbA, PsbB, PsbC, PsbD, PsbE, PsbF, PsbH, PsbI, PsbJ, PsbK, PsbL, PsbM, PsbT, PsbY, PsbZ, Psb30/Ycf12, at least 3 peripheral proteins of the oxygen-evolving complex and a large number of cofactors. It forms dimeric complexes.

The protein localises to the plastid. It is found in the chloroplast thylakoid membrane. Functionally, found at the monomer-monomer interface of the photosystem II (PS II) dimer, plays a role in assembly and dimerization of PSII. PSII is a light-driven water plastoquinone oxidoreductase, using light energy to abstract electrons from H(2)O, generating a proton gradient subsequently used for ATP formation. This chain is Photosystem II reaction center protein T, found in Gnetum gnemon (Spanish joint-fir).